A 772-amino-acid chain; its full sequence is Acylamino-acid-releasing enzyme 2 (772 aa).

Active-site charge relay system residues include Ser-617, Asp-708, and His-740.

It belongs to the peptidase S9C family. As to quaternary structure, homotetramer.

The protein localises to the cytoplasm. It catalyses the reaction Cleavage of an N-acetyl or N-formyl amino acid from the N-terminus of a polypeptide.. Catalyzes the hydrolysis of the N-terminal peptide bond of an N-acetylated peptide to generate an N-acetylated amino acid and a peptide with a free N-terminus. This is Acylamino-acid-releasing enzyme 2 from Oryza sativa subsp. japonica (Rice).